Here is a 217-residue protein sequence, read N- to C-terminus: Urease accessory protein UreF (217 aa).

It belongs to the UreF family. As to quaternary structure, ureD, UreF and UreG form a complex that acts as a GTP-hydrolysis-dependent molecular chaperone, activating the urease apoprotein by helping to assemble the nickel containing metallocenter of UreC. The UreE protein probably delivers the nickel.

Its subcellular location is the cytoplasm. Its function is as follows. Required for maturation of urease via the functional incorporation of the urease nickel metallocenter. The chain is Urease accessory protein UreF from Ruegeria pomeroyi (strain ATCC 700808 / DSM 15171 / DSS-3) (Silicibacter pomeroyi).